Consider the following 196-residue polypeptide: dTTP/UTP pyrophosphatase (196 aa).

Residue aspartate 72 is the Proton acceptor of the active site.

The protein belongs to the Maf family. YhdE subfamily. Requires a divalent metal cation as cofactor.

The protein resides in the cytoplasm. It catalyses the reaction dTTP + H2O = dTMP + diphosphate + H(+). The catalysed reaction is UTP + H2O = UMP + diphosphate + H(+). In terms of biological role, nucleoside triphosphate pyrophosphatase that hydrolyzes dTTP and UTP. May have a dual role in cell division arrest and in preventing the incorporation of modified nucleotides into cellular nucleic acids. This Chlamydia trachomatis serovar L2 (strain ATCC VR-902B / DSM 19102 / 434/Bu) protein is dTTP/UTP pyrophosphatase.